A 163-amino-acid chain; its full sequence is Large ribosomal subunit protein uL10 (163 aa).

Belongs to the universal ribosomal protein uL10 family. In terms of assembly, part of the ribosomal stalk of the 50S ribosomal subunit. The N-terminus interacts with L11 and the large rRNA to form the base of the stalk. The C-terminus forms an elongated spine to which L12 dimers bind in a sequential fashion forming a multimeric L10(L12)X complex.

Functionally, forms part of the ribosomal stalk, playing a central role in the interaction of the ribosome with GTP-bound translation factors. In Haemophilus ducreyi (strain 35000HP / ATCC 700724), this protein is Large ribosomal subunit protein uL10.